The chain runs to 3414 residues: Hemocyanin 1 (3414 aa).

The first 16 residues, 1-16 (MLSVRLLIVVLALANA), serve as a signal peptide directing secretion. Residue Glu-17 coordinates a divalent metal cation. Positions 17–437 (ENLVRKSVEH…PPVKHHQSAN (421 aa)) are functional unit a (wall). Residue His-58 coordinates Cu cation. Cys-64 and Cys-73 are joined by a disulfide. The segment at residues 74–76 (CIH) is a cross-link (2'-(S-cysteinyl)-histidine (Cys-His)). His-76, His-85, His-195, His-199, and His-226 together coordinate Cu cation. Cys-185 and Cys-252 are disulfide-bonded. The segment at residues 287–290 (CELH) is a cross-link (2'-(S-cysteinyl)-histidine (Cys-His)). The cysteines at positions 339 and 351 are disulfide-linked. The N-linked (GlcNAc...) asparagine glycan is linked to Asn-403. The interval 438 to 851 (LLVRKNINDL…RVKFDKVPRS (414 aa)) is functional unit b (wall). His-478 lines the Cu cation pocket. A disulfide bridge connects residues Cys-484 and Cys-495. The 2'-(S-cysteinyl)-histidine (Cys-His) cross-link spans 496-498 (CVH). 2 residues coordinate Cu cation: His-498 and His-507. Asn-545 carries N-linked (GlcNAc...) asparagine glycosylation. A disulfide bridge links Cys-608 with Cys-674. His-618, His-622, and His-649 together coordinate Cu cation. One copy of the WD 1 repeat lies at 628–669 (SEHFSMSSLHYTAFDPLFYFHHSNVDRLWAVWQALQMRRHKP). Glu-737 is a binding site for a divalent metal cation. The interval 852–1271 (RLIRKNVDRL…EVYQAEVTSA (420 aa)) is functional unit c (wall). His-892 contacts Cu cation. A disulfide bridge links Cys-898 with Cys-909. Positions 910–912 (CVH) form a cross-link, 2'-(S-cysteinyl)-histidine (Cys-His). The Cu cation site is built by His-912, His-921, His-1031, His-1035, and His-1062. Disulfide bonds link Cys-1021–Cys-1088 and Cys-1178–Cys-1184. A WD 2 repeat occupies 1041-1082 (AQPYGMASLRYTAFDPLFYLHHSNTDRIWAIWQALQKYRGKP). A functional unit d (wall) region spans residues 1272 to 1680 (NRIRKNIENL…AHTDDGHTEP (409 aa)). His-1309 provides a ligand contact to Cu cation. Residues Cys-1315 and Cys-1324 are joined by a disulfide bond. Positions 1325–1327 (CVH) form a cross-link, 2'-(S-cysteinyl)-histidine (Cys-His). The Cu cation site is built by His-1327, His-1336, His-1440, His-1444, and His-1471. Cystine bridges form between Cys-1430–Cys-1497 and Cys-1585–Cys-1595. Residues 1450 to 1491 (KGKYSMSNLDYAAFDPVFFLHHATTDRIWAIWQDLQRFRKRP) form a WD 3 repeat. Asn-1648 carries N-linked (GlcNAc...) asparagine glycosylation. Residues 1681–2097 (VMIRKDITQL…HDISSHHLSL (417 aa)) are functional unit e (wall). His-1721 serves as a coordination point for Cu cation. Cys-1727 and Cys-1738 are disulfide-bonded. Residues 1739 to 1741 (CVH) constitute a cross-link (2'-(S-cysteinyl)-histidine (Cys-His)). Cu cation contacts are provided by His-1741, His-1750, His-1863, His-1867, and His-1894. Disulfide bonds link Cys-1853–Cys-1920 and Cys-2009–Cys-2015. The stretch at 1873-1914 (KEPYGIGHLHYASYDPLFYIHHSQTDRIWAIWQSLQRFRGLS) is one WD 4 repeat. Residues 2098–2517 (NKVRHDLSTL…EDHHSSSMAG (420 aa)) are functional unit f (wall). His-2138 serves as a coordination point for Cu cation. Cys-2144 and Cys-2154 are joined by a disulfide. Asn-2145 carries an N-linked (GlcNAc...) asparagine glycan. The 2'-(S-cysteinyl)-histidine (Cys-His) cross-link spans 2155–2157 (CIH). Cu cation is bound by residues His-2157, His-2166, His-2276, His-2280, and His-2307. The WD 5 repeat unit spans residues 2163–2199 (PHWHRLYTLQFEQALRRHGSSVAVPYWDWTKPIHNIP). 2 disulfides stabilise this stretch: Cys-2266–Cys-2333 and Cys-2420–Cys-2426. A divalent metal cation is bound at residue Glu-2424. Positions 2518-2921 (HGVRKEINTL…EKHHEDHHED (404 aa)) are functional unit g (internal arc). His-2558 contacts Cu cation. Residues Cys-2564 and Cys-2574 are joined by a disulfide bond. A glycan (N-linked (GlcNAc...) asparagine) is linked at Asn-2571. The 2'-(S-cysteinyl)-histidine (Cys-His) cross-link spans 2575 to 2577 (CTH). 5 residues coordinate Cu cation: His-2577, His-2586, His-2686, His-2690, and His-2717. 2 cysteine pairs are disulfide-bonded: Cys-2676–Cys-2743 and Cys-2830–Cys-2836. Residues 2696 to 2737 (LTPYGMSTLEYTTYDPLFWLHHANTDRIWAIWQALQEYRGLP) form a WD 6 repeat. The functional unit h (internal slab) stretch occupies residues 2922–3414 (ILVRKNIHSL…LRIHVHVDDE (493 aa)). Cu cation is bound at residue His-2962. Cys-2968 and Cys-2978 form a disulfide bridge. Residues 2979 to 2981 (CVH) constitute a cross-link (2'-(S-cysteinyl)-histidine (Cys-His)). Positions 2981, 2990, 3091, 3095, and 3122 each coordinate Cu cation. Cys-3081 and Cys-3148 are joined by a disulfide. The WD 7 repeat unit spans residues 3101-3142 (AEKYSMSTLEYSAFDPYFMIHHASLDKIWIIWQELQKRRVKP). A glycan (N-linked (GlcNAc...) asparagine) is linked at Asn-3278. Cys-3367 and Cys-3400 form a disulfide bridge.

It belongs to the tyrosinase family. Hemocyanin subfamily. As to quaternary structure, homo-didecamer, with two decamers assembled face-to-face at their open ends. This didecamer form a stable 25 nM cylinder wall. Probably N-glycosylated. Asn-1280 and Asn-2484 are buried deeply in the protein which make them inaccessible for sugar attachment. Asn-3278 N-glycan is likely to represent a diantennate carbohydrate tree. The didecamer is almost evenly tagged by a total of 120 sugar trees. As to expression, hemolymph.

It localises to the secreted. Its subcellular location is the extracellular space. In terms of biological role, hemocyanins are copper-containing oxygen carriers occurring freely dissolved in the hemolymph of many mollusks and arthropods. The chain is Hemocyanin 1 from Megathura crenulata (Giant keyhole limpet).